The primary structure comprises 150 residues: LEDGIYRLRAVTTHNPDPGVGGEYATVEGARRPVKAEPNTPPFFEQQIWQVTRNADGQYTIKYQGLNTPFEYGFSYDELEPNAPVIAGDPKEYILQLVPSTADVYIIRAPIQRIGVDVEEGGQQNTLTYKFFPVDGSGGDRPAWRFTREE.

Belongs to the protease inhibitor I48 family. As to quaternary structure, homodimer. As to expression, uniformly expressed throughout the mature fruiting body (at mRNA and protein level).

Its function is as follows. Binds and inhibits cysteine proteinases. Inhibits most strongly papain and cathepsin L, more weakly bromelain and cathepsin B while it is completely ineffective against cathepsin H. This is Clitocypin (Cnc1) from Clitocybe nebularis (Clouded agaric).